Reading from the N-terminus, the 588-residue chain is Outer membrane transporter CdiB (588 aa).

The POTRA domain occupies 104 to 179; it reads FTVSSIVVSG…GVLHITVMEG (76 aa).

Belongs to the TPS (TC 1.B.20) family.

The protein resides in the cell outer membrane. Functionally, potential outer membrane protein component of a toxin-immunity protein module, which functions as a cellular contact-dependent growth inhibition (CDI) system. CDI modules allow bacteria to communicate with and inhibit the growth of closely related neighboring bacteria in a contact-dependent fashion. This protein may be required for secretion and assembly of the CdiA toxin protein. Inhibitory cells must be in logarithmic (not stationary) phase to inhibit growth of their targets, while the presence of P or S but not type 1 pili protects the target cells against growth inhibition. Its function is as follows. Probable member of a two partner secretion pathway (TPS) in which it mediates the secretion of CdiA. The chain is Outer membrane transporter CdiB from Escherichia coli.